The chain runs to 587 residues: MTLPYRFSSVRNHSLLLKTSHLCTPRSALGCCFSPKESPFFRKNTAQFLSPQKHTSLPLKLVCPLASFSSYADSEGEEQHHADQPIQNPHESSTVSNESDGKGNAEATGDFSGMAQAFHISSTTARAISIVIAFSALTLPIFMKSLGQGLALKTKLLSYATLLFGFYMAWNIGANDVANAMGTSVGSGALTIRQAVMTAAVLEFSGALLMGTHVTSTMQKGILMANVFQGKDMLLFAGLLSSLAAAGTWLQVASYYGWPVSTTHCIVGSMVGFGLVYGGAGAVFWSSLAKVASSWVISPILGALVSFLVYKCIRRFVYSAPNPGQAAAAAAPVAVFVGVASISSAALPLSKIFPIALSQALACGVAGAIVFDRIIRKQLGHLLAKTKSPETSQNQPKTIGFLSDIAGPTGTQLEIVYGIFGYMQVLSACFMSFAHGGNDVSNAIGPLAAALSILQNGAAAGGAEIVIPMDVLAWGGFGIVAGLTMWGYRVIATIGKKITELTPTRGFAAEFAAASVVLFASKLGLPISATHTLVGAVMGVGFARGLNSVRAETVREIVASWLVTIPVGATLAVIYTWIFTKILSFVL.

Residues 1–71 (MTLPYRFSSV…VCPLASFSSY (71 aa)) constitute a chloroplast transit peptide. The disordered stretch occupies residues 74 to 106 (SEGEEQHHADQPIQNPHESSTVSNESDGKGNAE). The segment covering 85–98 (PIQNPHESSTVSNE) has biased composition (polar residues). 12 helical membrane passes run 127-147 (AISI…KSLG), 154-174 (TKLL…NIGA), 195-215 (AVMT…THVT), 233-253 (MLLF…LQVA), 265-285 (CIVG…AVFW), 289-309 (AKVA…SFLV), 327-347 (AAAA…SAAL), 352-372 (IFPI…IVFD), 413-433 (LEIV…FMSF), 465-485 (IVIP…GLTM), 523-543 (LGLP…VGFA), and 559-579 (ASWL…TWIF).

This sequence belongs to the inorganic phosphate transporter (PiT) (TC 2.A.20.2) family. As to expression, mostly expressed in young green tissues. Present in both auto- and heterotrophic tissues. Also expressed in root stele.

It is found in the plastid. The protein resides in the chloroplast inner membrane. In terms of biological role, low affinity H(+)/Pi chloroplastic cotransporter. Involved in inorganic phosphate (orthophosphate, Pi) uptake in green parts of plants in Pi-sufficient conditions. Required for Pi retranslocation during Pi deprivation. The sequence is that of Inorganic phosphate transporter 2-1, chloroplastic (PHT2-1) from Arabidopsis thaliana (Mouse-ear cress).